Consider the following 395-residue polypeptide: GPI-anchor transamidase (395 aa).

Residues 1–27 (MVGTWFLCRGFTTLAGLLLLPFGSLAA) form the signal peptide. Residues 28–368 (SQIEDQAEQF…PKLKDWHPPG (341 aa)) lie on the Lumenal side of the membrane. Positions 79, 82, 118, and 120 each coordinate Ca(2+). Histidine 164 serves as the catalytic Proton donor. Cysteine 206 (nucleophile; acyl-thioester intermediate) is an active-site residue. A protein contacts are provided by cysteine 206, serine 232, and serine 234. Positions 231–236 (DSLSHQ) are autoinhibitory loop. Cysteine 275 and cysteine 280 are joined by a disulfide. The helical transmembrane segment at 369-385 (GFILGLWALIIMVFFKT) threads the bilayer. The Cytoplasmic portion of the chain corresponds to 386–395 (YGIKHMKFIF).

Belongs to the peptidase C13 family. In terms of assembly, heteropentamer. Part of the GPI-anchor transamidase complex, consisting of PIGK, PIGT, PIGS, PIGU and GAA1. Interacts with GPAA1. Interacts with PIGT; this interaction, via a disulfide link, stabilizes the expression of GAA1 and PIGK and links them to PIGS. In terms of processing, the disulfide bond between PIGK/GPI8 and PIGT is important for normal enzyme activity.

It localises to the endoplasmic reticulum membrane. Its pathway is glycolipid biosynthesis; glycosylphosphatidylinositol-anchor biosynthesis. Its activity is regulated as follows. In the absence of proproteins substrates, exists in an inactive state with a disrupted catalytic site by an autoinhibitory loop. The binding of proprotein substrates, particularly the CSP region, to GPI-T triggers concerted conformational changes that alleviate the inhibition by the autoinhibitory loop. Meanwhile, proprotein residues near the omega- site induce the formation of a catalytic cleft for catalysis, following which the products are released and GPI-T reverts to the inactive state. Functionally, catalytic subunit of the glycosylphosphatidylinositol-anchor (GPI-anchor) transamidase (GPI-T) complex that catalyzes the formation of the linkage between a proprotein and a GPI-anchor and participates in GPI anchored protein biosynthesis. Recognizes diverse proproteins at a C-terminal signal peptide (CSP) region that lacks consensus sequence and replaces it with a GPI-anchor via a transamidation reaction. Transamidation catalysis reaction follows a two-phase mechanism. In the acyl-enzyme phase, the carbonyl group of the proproteins's omega-site undergoes a nucleophilic attack forming an enzyme-substrate thioester bond. Followed by a general acid catalysis that allows CSP releasing, regenerating the carbonyl, and forming the acyl-enzyme intermediate. In the GPI-anchor attachment phase, the amino group of the GPI-anchor's ethanolamine phosphate, the one on third mannose (EtNP3), mediates a nucleophilic attack on the carbonyl of the acyl-enzyme intermediate, replacing the CSP, allowing GPI-anchor attachment to the omega-residue, therefore forming the product and freeing the enzyme. The protein is GPI-anchor transamidase of Sus scrofa (Pig).